Consider the following 340-residue polypeptide: Protein FAM50A-A (340 aa).

Disordered regions lie at residues 1-22 (MAQY…KKRE) and 123-178 (NLEE…EEEN). Positions 124-146 (LEEDEECEDEEGEEEESDKEDPP) are enriched in acidic residues. Basic and acidic residues predominate over residues 169–178 (PDRDREEEEN).

It is found in the nucleus. Functionally, probably involved in the regulation of pre-mRNA splicing. This Xenopus laevis (African clawed frog) protein is Protein FAM50A-A (fam50a-a).